We begin with the raw amino-acid sequence, 581 residues long: Chaotic nuclear migration protein 67 (581 aa).

Residues Ser17, Ser20, Ser72, Ser85, and Ser89 each carry the phosphoserine modification. Residues 86 to 150 (YQESPGLQER…PTDEHTSPDI (65 aa)) are disordered. Over residues 94 to 114 (ERPKNEKDKSPIGTDVHKKDV) the composition is skewed to basic and acidic residues. Ser151 carries the phosphoserine modification. Coiled-coil stretches lie at residues 179 to 252 (LGYQ…DTIQ), 306 to 363 (FLCA…LSKQ), and 373 to 451 (KLTI…NTSE).

Interacts directly with ADY3 and YOR129C. Interacts with ADY4. Probable component of a SPB complex composed of ADY3, SSP1, DON1, MPC54, SPO21/MPC70, NUD1 and CNM67. In terms of processing, phosphorylated in its N-terminal part.

Its subcellular location is the cytoplasm. The protein localises to the cytoskeleton. It is found in the microtubule organizing center. It localises to the spindle pole body. Functionally, involved in the pathway that organizes the shaping and sizing of the prospore membrane (PSM) during sporulation. Required for the proper formation of the spindle pole body (SPB) outer plaque. May connect the outer plaque to the central plaque embedded in the nuclear envelope. The protein is Chaotic nuclear migration protein 67 (CNM67) of Saccharomyces cerevisiae (strain ATCC 204508 / S288c) (Baker's yeast).